Consider the following 305-residue polypeptide: 5'-hydroxyaverantin dehydrogenase stcG (305 aa).

The NADP(+) site is built by S25, L27, Q48, D68, Y186, K190, and S221. Y186 functions as the Proton acceptor in the catalytic mechanism. K190 (lowers pKa of active site Tyr) is an active-site residue.

The protein belongs to the short-chain dehydrogenases/reductases (SDR) family.

The catalysed reaction is (1'S,5'S)-5'-hydroxyaverantin + NAD(+) = (S)-5'-oxoaverantin + NADH + H(+). It carries out the reaction (1'S,5'R)-5'-hydroxyaverantin + NAD(+) = (S)-5'-oxoaverantin + NADH + 2 H(+). The protein operates within mycotoxin biosynthesis; sterigmatocystin biosynthesis. In terms of biological role, 5'-hydroxyaverantin dehydrogenase; part of the gene cluster that mediates the biosynthesis of sterigmatocystin (ST), a polyketide-derived furanocoumarin which is part of the most toxic and carcinogenic compounds among the known mycotoxins. The first step in the biosynthesis of sterigmatocystin is the production of hexanoate by the fatty acid synthase (FAS) units stcJ and stcK. The polyketide backbone is assembled by the non-reducing polyketide synthase stcA by condensation of the starter hexanoyl-CoA and 7 malonyl-CoA extender units followed by cyclization and release of norsolorinic acid. Norsolorinic acid is the first stable intermediate in the biosynthesis of sterigmatocystin and is converted into averantin (AVN) by the ketoreductase stcE which reduces the hexanoate ketone to an alcohol. Averantin is then oxidized into 5'-hydroxyaverantin (HAVN) by the cytochrome P450 monooxygenase stcF. 5'-hydroxyaverantin is further converted to 5'-oxyaverantin (OAVN) by the 5'-hydroxyaverantin dehydrogenase stcG. The next step is the conversion of OAVN into averufin (AVF) which is catalyzed by a yet to be identified enzyme. The cytochrome P450 monooxygenase stcB and the flavin-binding monooxygenase stcW are both required for the conversion of averufin to 1-hydroxyversicolorone. The esterase stcI probably catalyzes the formation of versiconal hemiacetal acetate from 1-hydroxyversicolorone. The oxydoreductase stcN then probably catalyzes the biosynthetic step from versiconal to versicolorin B (VERB). The next step is performed by the versicolorin B desaturase stcL to produce versicolorin A (VERA). The ketoreductase stcU and the cytochrome P450 monooxygenase stcS are involved in the conversion of versicolorin A to demethylsterigmatocystin. The Baeyer-Villiger oxidas stcQ and the reductase stcR might be involved in the biosynthetic step from versicolorin A to demethylsterigmatocystin. The final step in the biosynthesis of sterigmatocystin is the methylation of demethylsterigmatocystin catalyzed by the methyltransferase stcP. This Emericella nidulans (strain FGSC A4 / ATCC 38163 / CBS 112.46 / NRRL 194 / M139) (Aspergillus nidulans) protein is 5'-hydroxyaverantin dehydrogenase stcG.